The primary structure comprises 730 residues: Catalase-peroxidase (730 aa).

The segment covering Met-1 to Gly-11 has biased composition (basic and acidic residues). The first 21 residues, Met-1–Ala-21, serve as a signal peptide directing secretion. Positions Met-1–Asn-24 are disordered. A cross-link (tryptophyl-tyrosyl-methioninium (Trp-Tyr) (with M-244)) is located at residues Trp-96 to Tyr-218. The active-site Proton acceptor is His-97. A cross-link (tryptophyl-tyrosyl-methioninium (Tyr-Met) (with W-96)) is located at residues Tyr-218 to Met-244. His-259 provides a ligand contact to heme b.

It belongs to the peroxidase family. Peroxidase/catalase subfamily. Homodimer or homotetramer. Heme b serves as cofactor. Formation of the three residue Trp-Tyr-Met cross-link is important for the catalase, but not the peroxidase activity of the enzyme.

It carries out the reaction H2O2 + AH2 = A + 2 H2O. The enzyme catalyses 2 H2O2 = O2 + 2 H2O. Its function is as follows. Bifunctional enzyme with both catalase and broad-spectrum peroxidase activity. This Rhodopseudomonas palustris (strain BisA53) protein is Catalase-peroxidase.